The following is a 208-amino-acid chain: Large ribosomal subunit protein uL3 (208 aa).

Residue glutamine 149 is modified to N5-methylglutamine.

Belongs to the universal ribosomal protein uL3 family. As to quaternary structure, part of the 50S ribosomal subunit. Forms a cluster with proteins L14 and L19. Methylated by PrmB.

In terms of biological role, one of the primary rRNA binding proteins, it binds directly near the 3'-end of the 23S rRNA, where it nucleates assembly of the 50S subunit. This is Large ribosomal subunit protein uL3 from Mannheimia succiniciproducens (strain KCTC 0769BP / MBEL55E).